The sequence spans 323 residues: Large ribosomal subunit protein uL10 (323 aa).

Residues 298 to 323 (AAAAPAAAAEPEEEDDDDDFGMGALF) are disordered. A compositionally biased stretch (acidic residues) spans 307–317 (EPEEEDDDDDF).

It belongs to the universal ribosomal protein uL10 family. P0 forms a pentameric complex by interaction with dimers of P1 and P2. In terms of processing, phosphorylated.

In terms of biological role, ribosomal protein P0 is the functional equivalent of E.coli protein L10. The sequence is that of Large ribosomal subunit protein uL10 from Trypanosoma cruzi.